A 43-amino-acid chain; its full sequence is uncharacterized protein (43 aa).

This sequence belongs to the ELIP/psbS family.

Its subcellular location is the plastid. The protein localises to the chloroplast. Functionally, possible role in chlorophyll and/or carotenoid binding. This is an uncharacterized protein from Cyanidium caldarium (Red alga).